The chain runs to 257 residues: UPF0246 protein Shew185_1115 (257 aa).

The protein belongs to the UPF0246 family.

This chain is UPF0246 protein Shew185_1115, found in Shewanella baltica (strain OS185).